A 299-amino-acid polypeptide reads, in one-letter code: Ankyrin repeat domain-containing protein 54 (299 aa).

A disordered region spans residues 1–27; the sequence is MAATGGGAEDESRSGRSSSEGECAVAP. Ala-2 carries the N-acetylalanine modification. Ser-62 bears the Phosphoserine mark. The short motif at 98-116 is the Nuclear localization signal (NLS) element; it reads RRLGPTGKEVHALKRLRDS. ANK repeat units lie at residues 108-137, 141-170, 174-203, and 207-239; these read HALK…DPCA, KGRT…DPNQ, LGNT…RVDA, and AGRT…EVKQ. An LYN-binding region spans residues 140–240; it reads DKGRTALHFA…EAVRLEVKQI (101 aa). The Nuclear export signal (NES) signature appears at 282–292; it reads LLASFTSLSLQ.

As to quaternary structure, interacts (via ankyrin repeat region) with LYN (via SH3-domain) in an activation-independent status of LYN. Forms a multiprotein complex with LYN and HCLS1. Interacts with TSN2, VAV1, DBNL and LASP1.

The protein resides in the nucleus. The protein localises to the cytoplasm. Its subcellular location is the midbody. Plays an important role in regulating intracellular signaling events associated with erythroid terminal differentiation. The protein is Ankyrin repeat domain-containing protein 54 (Ankrd54) of Rattus norvegicus (Rat).